The primary structure comprises 382 residues: Protein delta homolog 2 (382 aa).

Positions 1 to 26 (MPSGCRCLNLVCLLCILGATSQPARA) are cleaved as a signal peptide. EGF-like domains are found at residues 27-58 (DDCSSHCDLAHGCCAPDGSCRCDPGWEGLHCE), 62-89 (RMPGCQHGTCHQPWQCICHSGWAGKFCD), 91-129 (DEHICTSQSPCQNGGQCVYDGGGEYHCVCLPGFRGRGCE), and 131-172 (KAGP…AHCE). Residues 27-305 (DDCSSHCDLA…RQEAGLGESS (279 aa)) are Extracellular-facing. 17 disulfides stabilise this stretch: Cys-29/Cys-40, Cys-33/Cys-46, Cys-48/Cys-57, Cys-66/Cys-71, Cys-79/Cys-88, Cys-95/Cys-107, Cys-101/Cys-117, Cys-119/Cys-128, Cys-135/Cys-148, Cys-142/Cys-160, Cys-162/Cys-171, Cys-178/Cys-189, Cys-183/Cys-198, Cys-200/Cys-209, Cys-216/Cys-227, Cys-221/Cys-236, and Cys-238/Cys-247. Residue Asn-157 is glycosylated (N-linked (GlcNAc...) asparagine). The EGF-like 5; calcium-binding domain occupies 174–210 (NVDDCLMRPCANGATCIDGINRFSCLCPEGFAGRFCT). Residues 212–248 (NLDDCASRPCQRGARCRDRVHDFDCLCPSGYGGKTCE) form the EGF-like 6; calcium-binding domain. The helical transmembrane segment at 306-326 (LVALVVFGSLTAALVLATVLL) threads the bilayer. Topologically, residues 327-382 (TLRAWRRGICPTGPCCDPAPHYAPARQDQECQVSMLPAGFPLSPDLPPEPGKTTAL) are cytoplasmic.

It localises to the membrane. Functionally, regulates adipogenesis. This is Protein delta homolog 2 (Dlk2) from Rattus norvegicus (Rat).